The primary structure comprises 420 residues: Gamma-glutamyl phosphate reductase (420 aa).

It belongs to the gamma-glutamyl phosphate reductase family.

It is found in the cytoplasm. The catalysed reaction is L-glutamate 5-semialdehyde + phosphate + NADP(+) = L-glutamyl 5-phosphate + NADPH + H(+). It participates in amino-acid biosynthesis; L-proline biosynthesis; L-glutamate 5-semialdehyde from L-glutamate: step 2/2. Its function is as follows. Catalyzes the NADPH-dependent reduction of L-glutamate 5-phosphate into L-glutamate 5-semialdehyde and phosphate. The product spontaneously undergoes cyclization to form 1-pyrroline-5-carboxylate. In Shewanella denitrificans (strain OS217 / ATCC BAA-1090 / DSM 15013), this protein is Gamma-glutamyl phosphate reductase.